A 416-amino-acid polypeptide reads, in one-letter code: Serine hydroxymethyltransferase (416 aa).

Residues L118 and 122–124 contribute to the (6S)-5,6,7,8-tetrahydrofolate site; that span reads GHL. K226 carries the post-translational modification N6-(pyridoxal phosphate)lysine. (6S)-5,6,7,8-tetrahydrofolate is bound by residues E242 and 350–352; that span reads SPF.

Belongs to the SHMT family. Homodimer. It depends on pyridoxal 5'-phosphate as a cofactor.

The protein localises to the cytoplasm. It catalyses the reaction (6R)-5,10-methylene-5,6,7,8-tetrahydrofolate + glycine + H2O = (6S)-5,6,7,8-tetrahydrofolate + L-serine. It functions in the pathway one-carbon metabolism; tetrahydrofolate interconversion. The protein operates within amino-acid biosynthesis; glycine biosynthesis; glycine from L-serine: step 1/1. Catalyzes the reversible interconversion of serine and glycine with tetrahydrofolate (THF) serving as the one-carbon carrier. This reaction serves as the major source of one-carbon groups required for the biosynthesis of purines, thymidylate, methionine, and other important biomolecules. Also exhibits THF-independent aldolase activity toward beta-hydroxyamino acids, producing glycine and aldehydes, via a retro-aldol mechanism. In Wolinella succinogenes (strain ATCC 29543 / DSM 1740 / CCUG 13145 / JCM 31913 / LMG 7466 / NCTC 11488 / FDC 602W) (Vibrio succinogenes), this protein is Serine hydroxymethyltransferase.